A 258-amino-acid chain; its full sequence is Regulatory protein RecX (258 aa).

This sequence belongs to the RecX family.

Its subcellular location is the cytoplasm. In terms of biological role, modulates RecA activity. The sequence is that of Regulatory protein RecX from Streptococcus pyogenes serotype M12 (strain MGAS2096).